A 1370-amino-acid chain; its full sequence is DNA-directed RNA polymerase subunit beta (1370 aa).

This sequence belongs to the RNA polymerase beta chain family. As to quaternary structure, the RNAP catalytic core consists of 2 alpha, 1 beta, 1 beta' and 1 omega subunit. When a sigma factor is associated with the core the holoenzyme is formed, which can initiate transcription.

It catalyses the reaction RNA(n) + a ribonucleoside 5'-triphosphate = RNA(n+1) + diphosphate. DNA-dependent RNA polymerase catalyzes the transcription of DNA into RNA using the four ribonucleoside triphosphates as substrates. This chain is DNA-directed RNA polymerase subunit beta, found in Geobacter metallireducens (strain ATCC 53774 / DSM 7210 / GS-15).